An 852-amino-acid polypeptide reads, in one-letter code: Lon protease homolog 2, peroxisomal (852 aa).

Residue Ser2 is modified to N-acetylserine. One can recognise a Lon N-terminal domain in the interval 13-222 (LPLLLTHEGV…MTIPLLVRQI (210 aa)). ATP is bound at residue 375-382 (GPPGVGKT). The Lon proteolytic domain maps to 651–837 (LSQPGVAIGL…DEVLNAAFDG (187 aa)). Residues Ser743 and Lys786 contribute to the active site. Residues 850–852 (SKL) carry the Microbody targeting signal motif.

The protein belongs to the peptidase S16 family. As to quaternary structure, interacts with PEX5. Interacts with TYSND1. May interact with enzymes involved in beta-oxidation of fatty acids, including ACOX1/AOX. Widely expressed, with high levels in the liver, kidney and pancreas.

The protein resides in the peroxisome matrix. It carries out the reaction Hydrolysis of proteins in presence of ATP.. Functionally, ATP-dependent serine protease that mediates the selective degradation of misfolded and unassembled polypeptides in the peroxisomal matrix. Necessary for type 2 peroxisome targeting signal (PTS2)-containing protein processing and facilitates peroxisome matrix protein import. May indirectly regulate peroxisomal fatty acid beta-oxidation through degradation of the self-processed forms of TYSND1. This is Lon protease homolog 2, peroxisomal from Homo sapiens (Human).